The primary structure comprises 851 residues: Probable disease resistance protein At1g15890 (851 aa).

In terms of domain architecture, NB-ARC spans 139–441; that stretch reads AEKIPAPKVE…CEGFIDGNED (303 aa). 181–188 is a binding site for ATP; that stretch reads GMGGVGKT. LRR repeat units lie at residues 514–535, 536–557, 560–582, 584–605, and 607–629; these read SLRR…SNSP, NLST…FFRF, ALVV…ISKL, SLQY…FKEL, and KLIH…ATSL.

Belongs to the disease resistance NB-LRR family.

In terms of biological role, probable disease resistance protein. This Arabidopsis thaliana (Mouse-ear cress) protein is Probable disease resistance protein At1g15890.